The following is a 638-amino-acid chain: Threonine--tRNA ligase (638 aa).

The 61-residue stretch at 1-61 (MPIITLPDGS…NSDSKVVIIT (61 aa)) folds into the TGS domain. The catalytic stretch occupies residues 242–533 (DHRKLGKKHS…LIEQYEAKFP (292 aa)). Residues cysteine 333, histidine 384, and histidine 510 each contribute to the Zn(2+) site.

This sequence belongs to the class-II aminoacyl-tRNA synthetase family. In terms of assembly, homodimer. Requires Zn(2+) as cofactor.

The protein resides in the cytoplasm. The enzyme catalyses tRNA(Thr) + L-threonine + ATP = L-threonyl-tRNA(Thr) + AMP + diphosphate + H(+). Its function is as follows. Catalyzes the attachment of threonine to tRNA(Thr) in a two-step reaction: L-threonine is first activated by ATP to form Thr-AMP and then transferred to the acceptor end of tRNA(Thr). Also edits incorrectly charged L-seryl-tRNA(Thr). The polypeptide is Threonine--tRNA ligase (Prochlorococcus marinus (strain MIT 9215)).